The sequence spans 152 residues: uncharacterized protein (152 aa).

The next 5 helical transmembrane spans lie at 2 to 22, 33 to 53, 58 to 78, 97 to 117, and 122 to 142; these read GVVF…LKLM, LKMI…WLIM, FLIE…LIYL, FMGN…IEYV, and IASP…FFNC.

It localises to the cell membrane. This is an uncharacterized protein from Methanocaldococcus jannaschii (strain ATCC 43067 / DSM 2661 / JAL-1 / JCM 10045 / NBRC 100440) (Methanococcus jannaschii).